A 135-amino-acid polypeptide reads, in one-letter code: Protein 4.7 (135 aa).

This Escherichia coli (Bacteriophage T7) protein is Protein 4.7.